The following is a 161-amino-acid chain: Lipoprotein signal peptidase (161 aa).

The next 4 membrane-spanning stretches (helical) occupy residues Leu-8 to Ala-28, Ile-40 to Ser-60, Gln-67 to Ile-87, and Ile-91 to Phe-111. Active-site residues include Asp-122 and Asp-140. Residues Phe-136–Phe-156 traverse the membrane as a helical segment.

It belongs to the peptidase A8 family.

It localises to the cell inner membrane. The catalysed reaction is Release of signal peptides from bacterial membrane prolipoproteins. Hydrolyzes -Xaa-Yaa-Zaa-|-(S,diacylglyceryl)Cys-, in which Xaa is hydrophobic (preferably Leu), and Yaa (Ala or Ser) and Zaa (Gly or Ala) have small, neutral side chains.. It participates in protein modification; lipoprotein biosynthesis (signal peptide cleavage). Its function is as follows. This protein specifically catalyzes the removal of signal peptides from prolipoproteins. In Francisella tularensis subsp. tularensis (strain FSC 198), this protein is Lipoprotein signal peptidase.